Consider the following 178-residue polypeptide: ATP synthase subunit delta (178 aa).

Belongs to the ATPase delta chain family. F-type ATPases have 2 components, F(1) - the catalytic core - and F(0) - the membrane proton channel. F(1) has five subunits: alpha(3), beta(3), gamma(1), delta(1), epsilon(1). F(0) has three main subunits: a(1), b(2) and c(10-14). The alpha and beta chains form an alternating ring which encloses part of the gamma chain. F(1) is attached to F(0) by a central stalk formed by the gamma and epsilon chains, while a peripheral stalk is formed by the delta and b chains.

The protein localises to the cell membrane. Its function is as follows. F(1)F(0) ATP synthase produces ATP from ADP in the presence of a proton or sodium gradient. F-type ATPases consist of two structural domains, F(1) containing the extramembraneous catalytic core and F(0) containing the membrane proton channel, linked together by a central stalk and a peripheral stalk. During catalysis, ATP synthesis in the catalytic domain of F(1) is coupled via a rotary mechanism of the central stalk subunits to proton translocation. Functionally, this protein is part of the stalk that links CF(0) to CF(1). It either transmits conformational changes from CF(0) to CF(1) or is implicated in proton conduction. The chain is ATP synthase subunit delta from Streptococcus pyogenes serotype M3 (strain SSI-1).